A 486-amino-acid polypeptide reads, in one-letter code: PTS system N-acetylmuramic acid-specific EIIBC component (486 aa).

The PTS EIIB type-1 domain maps to M1–G89. C28 functions as the Phosphocysteine intermediate; for EIIB activity in the catalytic mechanism. A PTS EIIC type-1 domain is found at S127–S486. 10 helical membrane-spanning segments follow: residues F129–F149, L170–G190, A196–N216, F230–I250, M268–M288, A312–V332, L347–F367, G381–P401, I411–G431, and I453–L473.

Its subcellular location is the cell inner membrane. The enzyme catalyses N-acetyl-beta-D-muramate(out) + N(pros)-phospho-L-histidyl-[protein] = N-acetyl-beta-D-muramate 6-phosphate(in) + L-histidyl-[protein]. The phosphoenolpyruvate-dependent sugar phosphotransferase system (sugar PTS), a major carbohydrate active transport system, catalyzes the phosphorylation of incoming sugar substrates concomitantly with their translocation across the cell membrane. This system is involved in N-acetylmuramic acid (MurNAc) transport, yielding cytoplasmic MurNAc-6-P. Is also able to take up anhydro-N-acetylmuramic acid (anhMurNAc), but cannot phosphorylate the carbon 6, probably because of the 1,6-anhydro ring. In Vibrio vulnificus (strain CMCP6), this protein is PTS system N-acetylmuramic acid-specific EIIBC component (murP).